We begin with the raw amino-acid sequence, 68 residues long: Non-disulfide-bridged peptide 5.6 (68 aa).

An N-terminal signal peptide occupies residues 1 to 23; the sequence is MKTQVIIFIMAVVFLQLLSQSEA. Positions 37–68 are excised as a propeptide; sequence ELRNIDLDQFDDMFDEPEISAADMRFLQELLK.

It belongs to the non-disulfide-bridged peptide (NDBP) superfamily. Short antimicrobial peptide (group 4) family. In terms of tissue distribution, expressed by the venom gland.

The protein localises to the secreted. The protein resides in the target cell membrane. Functionally, antibacterial peptide with activity against both Gram-positive and Gram-negative bacteria probably by forming pores in the cell membrane. Also has weak hemolytic activity. Does not show antifungal activity. This is Non-disulfide-bridged peptide 5.6 from Hoffmannihadrurus gertschi (Scorpion).